We begin with the raw amino-acid sequence, 465 residues long: UDP-N-acetylmuramoylalanine--D-glutamate ligase (465 aa).

124–130 (GSDGKTT) is an ATP binding site.

Belongs to the MurCDEF family.

Its subcellular location is the cytoplasm. It catalyses the reaction UDP-N-acetyl-alpha-D-muramoyl-L-alanine + D-glutamate + ATP = UDP-N-acetyl-alpha-D-muramoyl-L-alanyl-D-glutamate + ADP + phosphate + H(+). The protein operates within cell wall biogenesis; peptidoglycan biosynthesis. In terms of biological role, cell wall formation. Catalyzes the addition of glutamate to the nucleotide precursor UDP-N-acetylmuramoyl-L-alanine (UMA). The protein is UDP-N-acetylmuramoylalanine--D-glutamate ligase of Ruminiclostridium cellulolyticum (strain ATCC 35319 / DSM 5812 / JCM 6584 / H10) (Clostridium cellulolyticum).